Consider the following 559-residue polypeptide: 2-succinyl-5-enolpyruvyl-6-hydroxy-3-cyclohexene-1-carboxylate synthase (559 aa).

It belongs to the TPP enzyme family. MenD subfamily. In terms of assembly, homodimer. Mg(2+) is required as a cofactor. Requires Mn(2+) as cofactor. It depends on thiamine diphosphate as a cofactor.

It catalyses the reaction isochorismate + 2-oxoglutarate + H(+) = 5-enolpyruvoyl-6-hydroxy-2-succinyl-cyclohex-3-ene-1-carboxylate + CO2. It functions in the pathway quinol/quinone metabolism; 1,4-dihydroxy-2-naphthoate biosynthesis; 1,4-dihydroxy-2-naphthoate from chorismate: step 2/7. The protein operates within quinol/quinone metabolism; menaquinone biosynthesis. In terms of biological role, catalyzes the thiamine diphosphate-dependent decarboxylation of 2-oxoglutarate and the subsequent addition of the resulting succinic semialdehyde-thiamine pyrophosphate anion to isochorismate to yield 2-succinyl-5-enolpyruvyl-6-hydroxy-3-cyclohexene-1-carboxylate (SEPHCHC). The sequence is that of 2-succinyl-5-enolpyruvyl-6-hydroxy-3-cyclohexene-1-carboxylate synthase from Edwardsiella ictaluri (strain 93-146).